A 463-amino-acid chain; its full sequence is Hexokinase-7 (463 aa).

A Hexokinase domain is found at 7 to 456 (AAAEQVVAAL…SGLGAALIAA (450 aa)). Positions 62–199 (NGTEEGLFYA…GLDMRVSALI (138 aa)) are hexokinase small subdomain. Residues Gly-76, Thr-77, and Asn-78 each contribute to the ADP site. D-glucose contacts are provided by Thr-165, Lys-166, Asn-200, and Asp-201. The segment at 200–445 (NDTVGTLAAG…KSVAVKLAND (246 aa)) is hexokinase large subdomain. Residue Thr-224 coordinates ADP. D-glucose is bound by residues Asn-227, Glu-255, and Glu-286. Gly-410 is a binding site for ADP.

Belongs to the hexokinase family. In terms of tissue distribution, expressed in roots, leaves, flowers, immature seeds and seed coat.

The protein localises to the cytoplasm. It carries out the reaction a D-hexose + ATP = a D-hexose 6-phosphate + ADP + H(+). The catalysed reaction is D-fructose + ATP = D-fructose 6-phosphate + ADP + H(+). The enzyme catalyses D-glucose + ATP = D-glucose 6-phosphate + ADP + H(+). The protein operates within carbohydrate metabolism; hexose metabolism. Its pathway is carbohydrate degradation; glycolysis; D-glyceraldehyde 3-phosphate and glycerone phosphate from D-glucose: step 1/4. Functionally, fructose and glucose phosphorylating enzyme. Functions in sugar signaling via a glycolysis-dependent manner under aerobic conditions, but its signaling role is suppressed when oxygen is deficient. The protein is Hexokinase-7 (HXK7) of Oryza sativa subsp. japonica (Rice).